The primary structure comprises 332 residues: Biotin synthase (332 aa).

One can recognise a Radical SAM core domain in the interval His-53–Arg-282. [4Fe-4S] cluster-binding residues include Cys-71, Cys-75, and Cys-78. Residues Cys-115, Cys-147, Cys-207, and Arg-277 each contribute to the [2Fe-2S] cluster site.

This sequence belongs to the radical SAM superfamily. Biotin synthase family. As to quaternary structure, homodimer. [4Fe-4S] cluster is required as a cofactor. It depends on [2Fe-2S] cluster as a cofactor.

The enzyme catalyses (4R,5S)-dethiobiotin + (sulfur carrier)-SH + 2 reduced [2Fe-2S]-[ferredoxin] + 2 S-adenosyl-L-methionine = (sulfur carrier)-H + biotin + 2 5'-deoxyadenosine + 2 L-methionine + 2 oxidized [2Fe-2S]-[ferredoxin]. The protein operates within cofactor biosynthesis; biotin biosynthesis; biotin from 7,8-diaminononanoate: step 2/2. Its function is as follows. Catalyzes the conversion of dethiobiotin (DTB) to biotin by the insertion of a sulfur atom into dethiobiotin via a radical-based mechanism. In Bacillus mycoides (strain KBAB4) (Bacillus weihenstephanensis), this protein is Biotin synthase.